The chain runs to 169 residues: Oleosin Cor a 15 (169 aa).

Helical transmembrane passes span 38-58 (IAVV…GLTF) and 70-90 (PLFV…GLAV). The Proline-knot motif lies at 70 to 81 (PLFVLCSPVLVP). Basic and acidic residues-rich tracts occupy residues 122-131 (QMEHAKRRAQ) and 160-169 (EGGRGEEKKT). The tract at residues 122–169 (QMEHAKRRAQDTAGHLGQKARETGQTVTGKGQEAGKTLEGGRGEEKKT) is disordered.

It belongs to the oleosin family. As to expression, expressed in seeds (at protein level).

Its subcellular location is the lipid droplet. The protein resides in the membrane. Functionally, may have a structural role to stabilize the lipid body during desiccation of the seed by preventing coalescence of the oil. Probably interacts with both lipid and phospholipid moieties of lipid bodies. May also provide recognition signals for specific lipase anchorage in lipolysis during seedling growth. This Corylus avellana (European hazel) protein is Oleosin Cor a 15.